The chain runs to 36 residues: Kappa-isophellitoxin-Tst1a (36 aa).

Residues 2–36 (CENNFSDRECERRKKDCDSSMKFRELSCPKTCGTC) form the ShKT domain. 3 disulfide bridges follow: Cys2-Cys36, Cys11-Cys29, and Cys18-Cys33.

It belongs to the sea anemone type 1 potassium channel toxin family. Type 1a subfamily. Predominantly expressed in mesenterial filaments (at protein level), a morphological structure that has a functional role in prey killing and digestion. Also expressed in club-tips, tentacles, actinopharynx, body column, mesenterial filaments and pedal disk.

The protein resides in the secreted. It localises to the nematocyst. Functionally, probable toxin with unknown function. Does not inhibit all channels tested. Is not cytotoxic on macrophage. The sequence is that of Kappa-isophellitoxin-Tst1a from Telmatactis stephensoni (Sea anemone).